Here is a 498-residue protein sequence, read N- to C-terminus: Galactose-1-phosphate uridylyltransferase (498 aa).

It belongs to the galactose-1-phosphate uridylyltransferase type 2 family.

It localises to the cytoplasm. The enzyme catalyses alpha-D-galactose 1-phosphate + UDP-alpha-D-glucose = alpha-D-glucose 1-phosphate + UDP-alpha-D-galactose. It participates in carbohydrate metabolism; galactose metabolism. The sequence is that of Galactose-1-phosphate uridylyltransferase from Staphylococcus carnosus (strain TM300).